A 709-amino-acid polypeptide reads, in one-letter code: Frizzled-6 (709 aa).

An N-terminal signal peptide occupies residues 1–18 (MERSPFLLACILLPLVRG). An FZ domain is found at 19–132 (HSLFTCEPIT…CNRLPHCDDT (114 aa)). At 19-201 (HSLFTCEPIT…SDELDFAKSF (183 aa)) the chain is on the extracellular side. 5 disulfide bridges follow: cysteine 24-cysteine 85, cysteine 32-cysteine 78, cysteine 69-cysteine 106, cysteine 95-cysteine 129, and cysteine 99-cysteine 123. Asparagine 38 is a glycosylation site (N-linked (GlcNAc...) asparagine). The helical transmembrane segment at 202–222 (IGIVSIFCLCATLFTFLTFLI) threads the bilayer. Residues 223-233 (DVRRFRYPERP) lie on the Cytoplasmic side of the membrane. A helical transmembrane segment spans residues 234–254 (IIYYSVCYSIVSLMYFVGFLL). Residues 255–284 (GNSTACNKADEKLELGDTVVLGSKNKACSV) are Extracellular-facing. N-linked (GlcNAc...) asparagine glycosylation occurs at asparagine 256. A helical transmembrane segment spans residues 285–305 (VFMFLYFFTMAGTVWWVILTI). Over 306–324 (TWFLAAGRKWSCEAIEQKA) the chain is Cytoplasmic. The chain crosses the membrane as a helical span at residues 325 to 345 (VWFHAVAWGAPGFLTVMLLAM). Residues 346–370 (NKVEGDNISGVCFVGLYDLDASRYF) are Extracellular-facing. Asparagine 352 carries N-linked (GlcNAc...) asparagine glycosylation. Residues 371-391 (VLLPLCLCVFVGLSLLLAGII) traverse the membrane as a helical segment. Topologically, residues 392–416 (SLNHVRQVIQHDGRNQEKLKKFMIR) are cytoplasmic. Residues 417-437 (IGVFSGLYLVPLVTLLGCYVY) form a helical membrane-spanning segment. Over 438–473 (ELVNRITWEMTWFSDHCHQYRIPCPYQANPKARPEL) the chain is Extracellular. Residues 474–494 (ALFMIKYLMTLIVGISAVFWV) form a helical membrane-spanning segment. Topologically, residues 495-709 (GSKKTCTEWA…EQGAGSHSDA (215 aa)) are cytoplasmic. The Lys-Thr-X-X-X-Trp motif, mediates interaction with the PDZ domain of Dvl family members signature appears at 498 to 503 (KTCTEW). A compositionally biased stretch (polar residues) spans 583 to 594 (QETSTEVHTSPE). Residues 583–709 (QETSTEVHTS…EQGAGSHSDA (127 aa)) form a disordered region. A compositionally biased stretch (basic and acidic residues) spans 596–616 (SVKEGRADRANTPSAKDRDCG). Over residues 620–629 (GPSSKLSGNR) the composition is skewed to polar residues. A compositionally biased stretch (basic and acidic residues) spans 630–644 (NGRESRAGGLKERSN). The residue at position 656 (serine 656) is a Phosphoserine. Positions 669–690 (CSTSQAASSPEPTSLKGSTSLP) are enriched in polar residues. A compositionally biased stretch (basic and acidic residues) spans 697–709 (ARKEQGAGSHSDA).

The protein belongs to the G-protein coupled receptor Fz/Smo family. Interacts with LMBR1L. In terms of processing, ubiquitinated by ZNRF3, leading to its degradation by the proteasome. As to expression, expressed in both hair cells and supporting cells in the utricle, saccule, cristae and the organ of Corti in the inner ear (at protein level).

The protein localises to the membrane. It localises to the cell membrane. The protein resides in the cell surface. It is found in the apical cell membrane. Its subcellular location is the cytoplasmic vesicle membrane. The protein localises to the endoplasmic reticulum membrane. In terms of biological role, receptor for Wnt proteins. Most of frizzled receptors are coupled to the beta-catenin canonical signaling pathway, which leads to the activation of disheveled proteins, inhibition of GSK-3 kinase, nuclear accumulation of beta-catenin and activation of Wnt target genes. A second signaling pathway involving PKC and calcium fluxes has been seen for some family members, but it is not yet clear if it represents a distinct pathway or if it can be integrated in the canonical pathway, as PKC seems to be required for Wnt-mediated inactivation of GSK-3 kinase. Both pathways seem to involve interactions with G-proteins. Activation by Wnt5A stimulates PKC activity via a G-protein-dependent mechanism. Involved in transduction and intercellular transmission of polarity information during tissue morphogenesis and/or in differentiated tissues. Together with FZD3, is involved in the neural tube closure and plays a role in the regulation of the establishment of planar cell polarity (PCP), particularly in the orientation of asymmetric bundles of stereocilia on the apical faces of a subset of auditory and vestibular sensory cells located in the inner ear. The sequence is that of Frizzled-6 (Fzd6) from Mus musculus (Mouse).